The chain runs to 365 residues: Aminomethyltransferase (365 aa).

Belongs to the GcvT family. The glycine cleavage system is composed of four proteins: P, T, L and H.

The enzyme catalyses N(6)-[(R)-S(8)-aminomethyldihydrolipoyl]-L-lysyl-[protein] + (6S)-5,6,7,8-tetrahydrofolate = N(6)-[(R)-dihydrolipoyl]-L-lysyl-[protein] + (6R)-5,10-methylene-5,6,7,8-tetrahydrofolate + NH4(+). The glycine cleavage system catalyzes the degradation of glycine. This is Aminomethyltransferase from Chlorobium luteolum (strain DSM 273 / BCRC 81028 / 2530) (Pelodictyon luteolum).